Here is a 236-residue protein sequence, read N- to C-terminus: DNA repair and recombination protein RadB (236 aa).

It belongs to the eukaryotic RecA-like protein family. RadB subfamily.

Functionally, involved in DNA repair and in homologous recombination. May regulate the cleavage reactions of the branch-structured DNA. Has a very weak ATPase activity that is not stimulated by DNA. Binds DNA but does not promote DNA strands exchange. In Halobacterium salinarum (strain ATCC 29341 / DSM 671 / R1), this protein is DNA repair and recombination protein RadB.